Reading from the N-terminus, the 149-residue chain is Mediator of RNA polymerase II transcription subunit 9 (149 aa).

Positions 18-64 (TNPTLDKPNAEATKEEFSSAENRDEKDYLTNQQPKNLSTPSTSSNGE) are disordered. Over residues 25 to 45 (PNAEATKEEFSSAENRDEKDY) the composition is skewed to basic and acidic residues. Residues 46–63 (LTNQQPKNLSTPSTSSNG) are compositionally biased toward polar residues. 2 short sequence motifs (nuclear localization signal) span residues 77 to 99 (RKDPNNLSNQLETLTGSIRHRLK) and 136 to 149 (KRDVLDDLYRKLQR).

This sequence belongs to the Mediator complex subunit 9 family. In terms of assembly, component of the Mediator complex, which is composed of at least 21 subunits that form three structurally distinct submodules. The Mediator head module contains MED6, MED8, MED11, SRB4/MED17, SRB5/MED18, ROX3/MED19, SRB2/MED20 and SRB6/MED22, the middle module contains MED1, MED4, NUT1/MED5, MED7, CSE2/MED9, NUT2/MED10, SRB7/MED21 and SOH1/MED31, and the tail module contains MED2, PGD1/MED3, RGR1/MED14, GAL11/MED15 and SIN4/MED16. The head and the middle modules interact directly with RNA polymerase II, whereas the elongated tail module interacts with gene-specific regulatory proteins. CSE2/MED9 interacts directly with MED4.

Its subcellular location is the nucleus. Its function is as follows. Component of the Mediator complex, a coactivator involved in the regulated transcription of nearly all RNA polymerase II-dependent genes. Mediator functions as a bridge to convey information from gene-specific regulatory proteins to the basal RNA polymerase II transcription machinery. The Mediator complex, having a compact conformation in its free form, is recruited to promoters by direct interactions with regulatory proteins and serves for the assembly of a functional preinitiation complex with RNA polymerase II and the general transcription factors. The Mediator complex unfolds to an extended conformation and partially surrounds RNA polymerase II, specifically interacting with the unphosphorylated form of the C-terminal domain (CTD) of RNA polymerase II. The Mediator complex dissociates from the RNA polymerase II holoenzyme and stays at the promoter when transcriptional elongation begins. The chain is Mediator of RNA polymerase II transcription subunit 9 (CSE2) from Saccharomyces cerevisiae (strain ATCC 204508 / S288c) (Baker's yeast).